The chain runs to 208 residues: N-(5'-phosphoribosyl)anthranilate isomerase (208 aa).

This sequence belongs to the TrpF family.

The catalysed reaction is N-(5-phospho-beta-D-ribosyl)anthranilate = 1-(2-carboxyphenylamino)-1-deoxy-D-ribulose 5-phosphate. It functions in the pathway amino-acid biosynthesis; L-tryptophan biosynthesis; L-tryptophan from chorismate: step 3/5. The protein is N-(5'-phosphoribosyl)anthranilate isomerase of Chlamydia trachomatis serovar A (strain ATCC VR-571B / DSM 19440 / HAR-13).